A 153-amino-acid chain; its full sequence is Peptide methionine sulfoxide reductase B6 (153 aa).

The MsrB domain maps to 28-149; the sequence is NEEWRTVLSP…NSVALKFSSA (122 aa). 4 residues coordinate Zn(2+): Cys-67, Cys-70, Cys-113, and Cys-116. Residues Cys-85 and Cys-138 are joined by a disulfide bond. The active-site Nucleophile is the Cys-138.

The protein belongs to the MsrB Met sulfoxide reductase family. Requires Zn(2+) as cofactor.

The protein resides in the cytoplasm. The protein localises to the cytosol. It carries out the reaction L-methionyl-[protein] + [thioredoxin]-disulfide + H2O = L-methionyl-(R)-S-oxide-[protein] + [thioredoxin]-dithiol. Catalyzes the reduction of methionine sulfoxide (MetSO) to methionine in proteins. Plays a protective role against oxidative stress by restoring activity to proteins that have been inactivated by methionine oxidation. MSRB family specifically reduces the MetSO R-enantiomer. The protein is Peptide methionine sulfoxide reductase B6 (MSRB6) of Arabidopsis thaliana (Mouse-ear cress).